We begin with the raw amino-acid sequence, 276 residues long: Pantothenate synthetase (276 aa).

26-33 provides a ligand contact to ATP; it reads MGFLHAGH. Histidine 33 functions as the Proton donor in the catalytic mechanism. Glutamine 57 is a binding site for (R)-pantoate. Beta-alanine is bound at residue glutamine 57. 143–146 serves as a coordination point for ATP; that stretch reads GQKD. Glutamine 149 lines the (R)-pantoate pocket. Residues isoleucine 172 and 180–183 contribute to the ATP site; that span reads MSSR.

The protein belongs to the pantothenate synthetase family. Homodimer.

The protein resides in the cytoplasm. It catalyses the reaction (R)-pantoate + beta-alanine + ATP = (R)-pantothenate + AMP + diphosphate + H(+). It participates in cofactor biosynthesis; (R)-pantothenate biosynthesis; (R)-pantothenate from (R)-pantoate and beta-alanine: step 1/1. In terms of biological role, catalyzes the condensation of pantoate with beta-alanine in an ATP-dependent reaction via a pantoyl-adenylate intermediate. This is Pantothenate synthetase from Herpetosiphon aurantiacus (strain ATCC 23779 / DSM 785 / 114-95).